Here is a 150-residue protein sequence, read N- to C-terminus: UPF0178 protein PputGB1_5282 (150 aa).

It belongs to the UPF0178 family.

The protein is UPF0178 protein PputGB1_5282 of Pseudomonas putida (strain GB-1).